Reading from the N-terminus, the 282-residue chain is Undecaprenyl-diphosphatase (282 aa).

The next 7 membrane-spanning stretches (helical) occupy residues Gly-40 to Tyr-60, Met-87 to Thr-107, Leu-116 to Leu-136, Ile-153 to Ser-173, Phe-196 to Thr-216, Asn-229 to Ile-249, and Ser-256 to Ala-276.

It belongs to the UppP family.

The protein localises to the cell inner membrane. The enzyme catalyses di-trans,octa-cis-undecaprenyl diphosphate + H2O = di-trans,octa-cis-undecaprenyl phosphate + phosphate + H(+). Functionally, catalyzes the dephosphorylation of undecaprenyl diphosphate (UPP). Confers resistance to bacitracin. This Chlorobium phaeobacteroides (strain BS1) protein is Undecaprenyl-diphosphatase.